The following is a 152-amino-acid chain: Deoxyuridine 5'-triphosphate nucleotidohydrolase (152 aa).

Substrate is bound by residues 71–73 (RSG), Asn84, 88–90 (LID), and Met98.

The protein belongs to the dUTPase family. The cofactor is Mg(2+).

It catalyses the reaction dUTP + H2O = dUMP + diphosphate + H(+). Its pathway is pyrimidine metabolism; dUMP biosynthesis; dUMP from dCTP (dUTP route): step 2/2. In terms of biological role, this enzyme is involved in nucleotide metabolism: it produces dUMP, the immediate precursor of thymidine nucleotides and it decreases the intracellular concentration of dUTP so that uracil cannot be incorporated into DNA. The chain is Deoxyuridine 5'-triphosphate nucleotidohydrolase from Shewanella amazonensis (strain ATCC BAA-1098 / SB2B).